Here is a 177-residue protein sequence, read N- to C-terminus: Putative zinc finger protein 826 (177 aa).

A C2H2-type 1; degenerate zinc finger spans residues 99-114; it reads KTFTWSSSPHKHRRTH. A C2H2-type 2; degenerate zinc finger spans residues 120–142; that stretch reads YKCEECGKAFTASSTLSEYKTIH. The segment at 148–170 adopts a C2H2-type 3 zinc-finger fold; sequence CKCEECGKAFNWSSDFNKHKRIH.

Its subcellular location is the nucleus. Functionally, may be involved in transcriptional regulation. This is Putative zinc finger protein 826 (ZNF826P) from Homo sapiens (Human).